Here is a 732-residue protein sequence, read N- to C-terminus: Elongation factor 2 (732 aa).

The 210-residue stretch at 19–228 folds into the tr-type G domain; sequence ELIRNIGIVA…TKITFKDIVE (210 aa). GTP contacts are provided by residues 28–35, 94–98, and 148–151; these read AHIDHGKT, DTPGH, and NKID. His598 is modified (diphthamide).

Belongs to the TRAFAC class translation factor GTPase superfamily. Classic translation factor GTPase family. EF-G/EF-2 subfamily.

It is found in the cytoplasm. Functionally, catalyzes the GTP-dependent ribosomal translocation step during translation elongation. During this step, the ribosome changes from the pre-translocational (PRE) to the post-translocational (POST) state as the newly formed A-site-bound peptidyl-tRNA and P-site-bound deacylated tRNA move to the P and E sites, respectively. Catalyzes the coordinated movement of the two tRNA molecules, the mRNA and conformational changes in the ribosome. The polypeptide is Elongation factor 2 (fusA) (Thermoplasma acidophilum (strain ATCC 25905 / DSM 1728 / JCM 9062 / NBRC 15155 / AMRC-C165)).